Reading from the N-terminus, the 463-residue chain is Adenylosuccinate synthetase, chloroplastic (463 aa).

Residues 44–50 (GDEGKGK) and 72–74 (GHT) contribute to the GTP site. Catalysis depends on Asp-45, which acts as the Proton acceptor. The Mg(2+) site is built by Asp-45 and Gly-72. Residues 45-48 (DEGK), 70-73 (NAGH), Thr-164, Arg-178, Asn-256, Thr-271, and Arg-335 contribute to the IMP site. His-73 functions as the Proton donor in the catalytic mechanism. Substrate is bound at residue 331–337 (TTTGRPR). GTP contacts are provided by residues Arg-337, 363–365 (KLD), and 446–448 (GVG).

Belongs to the adenylosuccinate synthetase family. In terms of assembly, homodimer. Mg(2+) is required as a cofactor.

The protein localises to the plastid. Its subcellular location is the chloroplast. The enzyme catalyses IMP + L-aspartate + GTP = N(6)-(1,2-dicarboxyethyl)-AMP + GDP + phosphate + 2 H(+). It functions in the pathway purine metabolism; AMP biosynthesis via de novo pathway; AMP from IMP: step 1/2. In terms of biological role, plays an important role in the de novo pathway and in the salvage pathway of purine nucleotide biosynthesis. Catalyzes the first committed step in the biosynthesis of AMP from IMP. This Chlamydomonas reinhardtii (Chlamydomonas smithii) protein is Adenylosuccinate synthetase, chloroplastic.